Here is a 496-residue protein sequence, read N- to C-terminus: Membrane-bound lytic murein transglycosylase F (496 aa).

The N-terminal stretch at 1-31 (MPIFSTRVLTYLRCIFRLFIGLTLLLTLVGC) is a signal peptide. The non-LT domain stretch occupies residues 32–271 (DFYTPSSQLE…KLDEKYFGHV (240 aa)). The tract at residues 273-496 (NFDFVDTRTF…AEVVKQITLR (224 aa)) is LT domain. The active site involves Glu316. Residues 464-486 (HRREELDDDDSSEPPSAERPTVI) are disordered.

It in the N-terminal section; belongs to the bacterial solute-binding protein 3 family. The protein in the C-terminal section; belongs to the transglycosylase Slt family.

The protein localises to the cell outer membrane. The enzyme catalyses Exolytic cleavage of the (1-&gt;4)-beta-glycosidic linkage between N-acetylmuramic acid (MurNAc) and N-acetylglucosamine (GlcNAc) residues in peptidoglycan, from either the reducing or the non-reducing ends of the peptidoglycan chains, with concomitant formation of a 1,6-anhydrobond in the MurNAc residue.. In terms of biological role, murein-degrading enzyme that degrades murein glycan strands and insoluble, high-molecular weight murein sacculi, with the concomitant formation of a 1,6-anhydromuramoyl product. Lytic transglycosylases (LTs) play an integral role in the metabolism of the peptidoglycan (PG) sacculus. Their lytic action creates space within the PG sacculus to allow for its expansion as well as for the insertion of various structures such as secretion systems and flagella. This is Membrane-bound lytic murein transglycosylase F from Aeromonas hydrophila subsp. hydrophila (strain ATCC 7966 / DSM 30187 / BCRC 13018 / CCUG 14551 / JCM 1027 / KCTC 2358 / NCIMB 9240 / NCTC 8049).